Reading from the N-terminus, the 349-residue chain is 5-deoxyribose 1-phosphate isomerase (349 aa).

Substrate contacts are provided by residues 49 to 51 (RGA), arginine 92, and glutamine 199. The active-site Proton donor is aspartate 240. Position 250–251 (250–251 (NK)) interacts with substrate.

This sequence belongs to the EIF-2B alpha/beta/delta subunits family. DrdI subfamily.

It catalyses the reaction 5-deoxy-alpha-D-ribose 1-phosphate = 5-deoxy-D-ribulose 1-phosphate. Its pathway is carbohydrate degradation. In terms of biological role, catalyzes the isomerization of 5-deoxy-alpha-D-ribose 1-phosphate to 5-deoxy-D-ribulose 1-phosphate, as part of a 5-deoxyribose salvage pathway that recycles this toxic radical SAM enzyme by-product to mainstream metabolites. The sequence is that of 5-deoxyribose 1-phosphate isomerase from Clostridium botulinum (strain Langeland / NCTC 10281 / Type F).